The sequence spans 190 residues: Probable chorismate pyruvate-lyase (190 aa).

Positions 77, 115, and 174 each coordinate substrate.

It belongs to the UbiC family.

It localises to the cytoplasm. It carries out the reaction chorismate = 4-hydroxybenzoate + pyruvate. It functions in the pathway cofactor biosynthesis; ubiquinone biosynthesis. Removes the pyruvyl group from chorismate, with concomitant aromatization of the ring, to provide 4-hydroxybenzoate (4HB) for the ubiquinone pathway. The sequence is that of Probable chorismate pyruvate-lyase from Shewanella sp. (strain MR-4).